The chain runs to 254 residues: Imidazole glycerol phosphate synthase subunit HisF (254 aa).

Active-site residues include Asp14 and Asp133.

The protein belongs to the HisA/HisF family. In terms of assembly, heterodimer of HisH and HisF.

The protein resides in the cytoplasm. It catalyses the reaction 5-[(5-phospho-1-deoxy-D-ribulos-1-ylimino)methylamino]-1-(5-phospho-beta-D-ribosyl)imidazole-4-carboxamide + L-glutamine = D-erythro-1-(imidazol-4-yl)glycerol 3-phosphate + 5-amino-1-(5-phospho-beta-D-ribosyl)imidazole-4-carboxamide + L-glutamate + H(+). The protein operates within amino-acid biosynthesis; L-histidine biosynthesis; L-histidine from 5-phospho-alpha-D-ribose 1-diphosphate: step 5/9. In terms of biological role, IGPS catalyzes the conversion of PRFAR and glutamine to IGP, AICAR and glutamate. The HisF subunit catalyzes the cyclization activity that produces IGP and AICAR from PRFAR using the ammonia provided by the HisH subunit. In Nitratiruptor sp. (strain SB155-2), this protein is Imidazole glycerol phosphate synthase subunit HisF.